Here is a 98-residue protein sequence, read N- to C-terminus: NADH-ubiquinone oxidoreductase chain 4L (98 aa).

Transmembrane regions (helical) follow at residues 1-21 (MTLI…GFLM), 29-49 (ALLC…LTVL), and 59-79 (MPII…ALLV).

The protein belongs to the complex I subunit 4L family. In terms of assembly, core subunit of respiratory chain NADH dehydrogenase (Complex I) which is composed of 45 different subunits.

It localises to the mitochondrion inner membrane. The enzyme catalyses a ubiquinone + NADH + 5 H(+)(in) = a ubiquinol + NAD(+) + 4 H(+)(out). Functionally, core subunit of the mitochondrial membrane respiratory chain NADH dehydrogenase (Complex I) which catalyzes electron transfer from NADH through the respiratory chain, using ubiquinone as an electron acceptor. Part of the enzyme membrane arm which is embedded in the lipid bilayer and involved in proton translocation. The polypeptide is NADH-ubiquinone oxidoreductase chain 4L (MT-ND4L) (Inia geoffrensis (Amazon river dolphin)).